Consider the following 516-residue polypeptide: GMP synthase [glutamine-hydrolyzing] (516 aa).

In terms of domain architecture, Glutamine amidotransferase type-1 spans 8-198 (KILILDFGSQ…VVNICGCDTL (191 aa)). Cys84 acts as the Nucleophile in catalysis. Residues His172 and Glu174 contribute to the active site. One can recognise a GMPS ATP-PPase domain in the interval 199–391 (WNIENIIEND…LGLPYNMLYR (193 aa)). Residue 226–232 (SGGVDSS) participates in ATP binding.

As to quaternary structure, homodimer.

The catalysed reaction is XMP + L-glutamine + ATP + H2O = GMP + L-glutamate + AMP + diphosphate + 2 H(+). The protein operates within purine metabolism; GMP biosynthesis; GMP from XMP (L-Gln route): step 1/1. Its function is as follows. Catalyzes the synthesis of GMP from XMP. The chain is GMP synthase [glutamine-hydrolyzing] from Francisella tularensis subsp. holarctica (strain LVS).